We begin with the raw amino-acid sequence, 228 residues long: uncharacterized protein (228 aa).

This is an uncharacterized protein from Archaeoglobus fulgidus (strain ATCC 49558 / DSM 4304 / JCM 9628 / NBRC 100126 / VC-16).